Here is a 307-residue protein sequence, read N- to C-terminus: Replication termination factor 2 (307 aa).

The segment at 193-296 is disordered; that stretch reads AKLEKKTKKP…SSAKRSKEES (104 aa). Residues 227–241 show a composition bias toward basic and acidic residues; sequence GKPEEADPDPREKKS. Position 288 is a phosphoserine (Ser288).

The protein belongs to the rtf2 family. In terms of assembly, interacts with DDI2; probably also interacts with DDI1. In terms of processing, undergoes proteasomal degradation, via DDI1 and DDI2. Removal from stalled replisomes and degradation are required for genome stability.

It is found in the chromosome. Functionally, replication termination factor which is a component of the elongating replisome. Required for ATR pathway signaling upon DNA damage and has a positive activity during DNA replication. Might function to facilitate fork pausing at replication fork barriers like the rDNA. May be globally required to stimulate ATR signaling after the fork stalls or encounters a lesion. Interacts with nascent DNA. This is Replication termination factor 2 from Mus musculus (Mouse).